Reading from the N-terminus, the 479-residue chain is MNTILAQQIANEGGVEAWMIAQQHKSLLRFLTCGSVDDGKSTLIGRLLHDTLQIYEDQLSSLHNDSKRHGTQGEKLDLALLVDGLQAEREQGITIDVAYRYFSTEKRKFIIADTPGHEQYTRNMATGASTCDLAILLIDARKGVLDQTRRHSFISTLLGIKHLVVAINKMDLVDYREETFARIREDYLTFAEQLPGDLDIRFVPLSALEGDNVAAQSANMRWYSGPTLLEVLETVDIQRAVDRQPMRFPVQYVNRPNLDFRGYAGTLASGSVKVGERIKVLPSGVESSVARIVTFDGDKEEACAGEAITLVLNDDIDISRGDLLLAANETLAPARHAAIDVVWMAEQPLAPGQSYDVKLAGKKTRARIEAICYQIDINNLTQRDVESLPLNGIGLVEMTFDEPLALDIYQQNPVTGGLIFIDRLSNVTVGAGMVRELDERGATPSVEYSAFELELNALVRRHFPHWDARDLLGDKHGAA.

Positions 25-239 constitute a tr-type G domain; sequence KSLLRFLTCG…EVLETVDIQR (215 aa). Residues 34–41 form a G1 region; that stretch reads GSVDDGKS. 34-41 serves as a coordination point for GTP; the sequence is GSVDDGKS. A G2 region spans residues 92 to 96; it reads GITID. The interval 113–116 is G3; sequence DTPG. GTP is bound by residues 113–117 and 168–171; these read DTPGH and NKMD. The segment at 168–171 is G4; it reads NKMD. Residues 206–208 are G5; it reads SAL.

Belongs to the TRAFAC class translation factor GTPase superfamily. Classic translation factor GTPase family. CysN/NodQ subfamily. Heterodimer composed of CysD, the smaller subunit, and CysN.

The enzyme catalyses sulfate + ATP + H(+) = adenosine 5'-phosphosulfate + diphosphate. The protein operates within sulfur metabolism; hydrogen sulfide biosynthesis; sulfite from sulfate: step 1/3. Its function is as follows. With CysD forms the ATP sulfurylase (ATPS) that catalyzes the adenylation of sulfate producing adenosine 5'-phosphosulfate (APS) and diphosphate, the first enzymatic step in sulfur assimilation pathway. APS synthesis involves the formation of a high-energy phosphoric-sulfuric acid anhydride bond driven by GTP hydrolysis by CysN coupled to ATP hydrolysis by CysD. This chain is Sulfate adenylyltransferase subunit 1, found in Salmonella heidelberg (strain SL476).